A 335-amino-acid polypeptide reads, in one-letter code: uncharacterized protein (335 aa).

28 to 35 (GPINSGKT) provides a ligand contact to ATP.

Belongs to the archaeal ATPase family.

This is an uncharacterized protein from Pyrococcus abyssi (strain GE5 / Orsay).